Here is a 107-residue protein sequence, read N- to C-terminus: Large ribosomal subunit protein uL24 (107 aa).

It belongs to the universal ribosomal protein uL24 family. In terms of assembly, part of the 50S ribosomal subunit.

Its function is as follows. One of two assembly initiator proteins, it binds directly to the 5'-end of the 23S rRNA, where it nucleates assembly of the 50S subunit. In terms of biological role, one of the proteins that surrounds the polypeptide exit tunnel on the outside of the subunit. This Streptomyces griseus subsp. griseus (strain JCM 4626 / CBS 651.72 / NBRC 13350 / KCC S-0626 / ISP 5235) protein is Large ribosomal subunit protein uL24.